Here is a 256-residue protein sequence, read N- to C-terminus: MSSGERVAKVVLVDIEGTTTSISFVHDVLFPYAKQNVEKFLRDFWKEDDIKHIVQDLKQVPKFADYKALLSAPPTEVDVELIAGFVRYLIDQDLKVTPMKTLQGLIWAQGYANGELKGHVYEDVPAAFEAWRAAGLRIAVYSSGSVAAQKLIFGHSLAGNLQPHLSAYFDTHVGHKQEQQSYENIAQQLKEDPKQILFLTDIPGEAAAARSAGLQAIILQRPGNAGLADDQKASFELIPDFKPLHNLKLPINKSQA.

Residues Asp-14 and Glu-16 each coordinate Mg(2+). Substrate is bound by residues Ser-142–Ser-143 and Lys-176. Asp-201 contributes to the Mg(2+) binding site.

This sequence belongs to the HAD-like hydrolase superfamily. MasA/MtnC family. As to quaternary structure, monomer. Mg(2+) serves as cofactor.

It localises to the cytoplasm. The protein localises to the nucleus. It catalyses the reaction 5-methylsulfanyl-2,3-dioxopentyl phosphate + H2O = 1,2-dihydroxy-5-(methylsulfanyl)pent-1-en-3-one + phosphate. Its pathway is amino-acid biosynthesis; L-methionine biosynthesis via salvage pathway; L-methionine from S-methyl-5-thio-alpha-D-ribose 1-phosphate: step 3/6. The protein operates within amino-acid biosynthesis; L-methionine biosynthesis via salvage pathway; L-methionine from S-methyl-5-thio-alpha-D-ribose 1-phosphate: step 4/6. Bifunctional enzyme that catalyzes the enolization of 2,3-diketo-5-methylthiopentyl-1-phosphate (DK-MTP-1-P) into the intermediate 2-hydroxy-3-keto-5-methylthiopentenyl-1-phosphate (HK-MTPenyl-1-P), which is then dephosphorylated to form the acireductone 1,2-dihydroxy-3-keto-5-methylthiopentene (DHK-MTPene). The polypeptide is Enolase-phosphatase E1 (Drosophila simulans (Fruit fly)).